Here is a 325-residue protein sequence, read N- to C-terminus: Putative 1-aminocyclopropane-1-carboxylate deaminase (325 aa).

Residue Lys54 is modified to N6-(pyridoxal phosphate)lysine.

The protein belongs to the ACC deaminase/D-cysteine desulfhydrase family. It depends on pyridoxal 5'-phosphate as a cofactor.

The catalysed reaction is 1-aminocyclopropane-1-carboxylate + H2O = 2-oxobutanoate + NH4(+). This chain is Putative 1-aminocyclopropane-1-carboxylate deaminase, found in Pyrococcus horikoshii (strain ATCC 700860 / DSM 12428 / JCM 9974 / NBRC 100139 / OT-3).